Here is a 706-residue protein sequence, read N- to C-terminus: Fatty acid oxidation complex subunit alpha (706 aa).

An enoyl-CoA hydratase region spans residues 1–188; that stretch reads MEKTFNLTRR…KMGLVNDVVP (188 aa). The interval 308–706 is 3-hydroxyacyl-CoA dehydrogenase; sequence RKVKKAVILG…TMAQENAHFF (399 aa).

This sequence in the N-terminal section; belongs to the enoyl-CoA hydratase/isomerase family. In the central section; belongs to the 3-hydroxyacyl-CoA dehydrogenase family. In terms of assembly, heterotetramer of two alpha chains (FadJ) and two beta chains (FadI).

The protein resides in the cytoplasm. The catalysed reaction is a (3S)-3-hydroxyacyl-CoA = a (2E)-enoyl-CoA + H2O. The enzyme catalyses a 4-saturated-(3S)-3-hydroxyacyl-CoA = a (3E)-enoyl-CoA + H2O. It carries out the reaction a (3S)-3-hydroxyacyl-CoA + NAD(+) = a 3-oxoacyl-CoA + NADH + H(+). It catalyses the reaction (3S)-3-hydroxybutanoyl-CoA = (3R)-3-hydroxybutanoyl-CoA. It participates in lipid metabolism; fatty acid beta-oxidation. Catalyzes the formation of a hydroxyacyl-CoA by addition of water on enoyl-CoA. Also exhibits 3-hydroxyacyl-CoA epimerase and 3-hydroxyacyl-CoA dehydrogenase activities. The chain is Fatty acid oxidation complex subunit alpha from Shewanella baltica (strain OS185).